Consider the following 327-residue polypeptide: Thioredoxin reductase sirT (327 aa).

FAD-binding positions include 15–18 (AGPA), 37–42 (DTGVFR), histidine 50, and alanine 115. Cysteine 139 and cysteine 142 are disulfide-bonded. FAD is bound by residues aspartate 289 and 296 to 297 (QV).

The protein belongs to the class-II pyridine nucleotide-disulfide oxidoreductase family. In terms of assembly, homodimer. FAD is required as a cofactor.

It functions in the pathway mycotoxin biosynthesis. In terms of biological role, thioredoxin reductase; part of the gene cluster that mediates the biosynthesis of sirodesmin PL, an epipolythiodioxopiperazine (ETP) characterized by a disulfide bridged cyclic dipeptide and that acts as a phytotoxin which is involved in the blackleg didease of canola. SirD catalyzes the O-prenylation of L-tyrosine (L-Tyr) in the presence of dimethylallyl diphosphate (DMAPP) to yield 4-O-dimethylallyl-L-Tyr, and therefore represents probably the first pathway-specific enzyme in the biosynthesis of sirodesmin PL. 4-O-dimethylallyl-L-Tyr, then undergoes condensation with L-Ser in a reaction catalyzed by the non-ribosomal peptide synthase sirP to form the diketopiperazine (DKP) backbone. Further bishydroxylation of the DKP performed by the cytochrome P450 monooxygenase sirC leads to the production of the intermediate phomamide. This step is essential to form the reactive thiol group required for toxicity of sirodesmin PL. The next steps of sirodesmin biosynthesis are not well understood yet, but some predictions could be made from intermediate compounds identification. Phomamide is converted into phomalizarine via oxidation, probably by sirT. Further oxidation, methylation (by sirM or sirN) and reduction steps convert phomalizarine to deacetyl sirodesmin. Finally, acetyltransferase sirH probably acetylates deacetyl sirodesmin to produce sirodesmin PL. The sequence is that of Thioredoxin reductase sirT from Leptosphaeria maculans (Blackleg fungus).